We begin with the raw amino-acid sequence, 712 residues long: Nucleolin (712 aa).

Residues 1–305 are disordered; sequence MVKLAKAGKN…KKQKVEGTEP (305 aa). N6-acetyllysine is present on residues Lys9, Lys15, and Lys16. Residues 24–43 are compositionally biased toward acidic residues; that stretch reads VEEDSEDEEMSEDEEDDSSG. 4 positions are modified to phosphoserine: Ser28, Ser34, Ser41, and Ser42. A compositionally biased stretch (low complexity) spans 56 to 107; the sequence is AAATSAKKVVVSPTKKVAVATPAKKAAVTPGKKAAATPAKKTVTPAKAVTTP. Residues 58-65 form repeat 1; that stretch reads ATSAKKVV. The segment at 58-135 is 8 X 8 AA tandem repeats of X-T-P-X-K-K-X-X; it reads ATSAKKVVVS…GAAIPAKGAK (78 aa). A Phosphoserine modification is found at Ser67. Residues Thr69, Thr76, Thr84, and Thr92 each carry the phosphothreonine modification. 3 consecutive repeat copies span residues 75 to 82, 83 to 90, and 91 to 98. At Lys96 the chain carries N6-acetyllysine. Phosphothreonine is present on Thr99. A 5; truncated repeat occupies 99–104; that stretch reads TPAKAV. An N6-acetyllysine modification is found at Lys102. Residues 105–112 form repeat 6; the sequence is TTPGKKGA. At Thr106 the chain carries Phosphothreonine. Lys109 carries the post-translational modification N6-acetyllysine. Thr113 is modified (phosphothreonine). N6-acetyllysine is present on Lys116. 2 tandem repeats follow at residues 120-127 and 128-135. Thr121 bears the Phosphothreonine mark. Low complexity predominate over residues 122 to 137; sequence PGKKGAAIPAKGAKNG. Lys124 is subject to N6-acetyllysine. Phosphoserine occurs at positions 145 and 153. Residues 145–171 are compositionally biased toward acidic residues; it reads SDEEEEDDSEEDEDDDEDEDEDEDEIE. Low complexity predominate over residues 172–183; it reads PAAMKAAAAAPA. A phosphoserine mark is found at Ser184 and Ser206. Residues 184–211 are compositionally biased toward acidic residues; the sequence is SEDEDDEDDEDDEDEDDDEEDDSEEEAM. Thr214 bears the Phosphothreonine mark. Acidic residues predominate over residues 234 to 274; sequence EDEDEEEDDEDEDDDDDDDDDDEDDEDEDDEEEEEEEEEEP. Basic and acidic residues predominate over residues 275–302; it reads VKEAPGKRKKEMAKQKAAPEAKKQKVEG. Lys299 is covalently cross-linked (Glycyl lysine isopeptide (Lys-Gly) (interchain with G-Cter in SUMO1); alternate). Lys299 participates in a covalent cross-link: Glycyl lysine isopeptide (Lys-Gly) (interchain with G-Cter in SUMO2); alternate. Thr303 carries the phosphothreonine modification. RRM domains lie at 309 to 385 and 395 to 468; these read FNLF…KPKG and RTLL…YTGE. N6-acetyllysine is present on Lys320. Lys326 is covalently cross-linked (Glycyl lysine isopeptide (Lys-Gly) (interchain with G-Cter in SUMO1); alternate). Lys326 is covalently cross-linked (Glycyl lysine isopeptide (Lys-Gly) (interchain with G-Cter in SUMO2); alternate). At Lys350 the chain carries N6-acetyllysine. Ser358 carries the post-translational modification Phosphoserine. The residue at position 369 (Thr369) is a Phosphothreonine. Lys372 participates in a covalent cross-link: Glycyl lysine isopeptide (Lys-Gly) (interchain with G-Cter in SUMO2). Lys379 participates in a covalent cross-link: Glycyl lysine isopeptide (Lys-Gly) (interchain with G-Cter in SUMO2); alternate. Residue Lys379 is modified to N6-acetyllysine; alternate. Residues Lys400 and Lys405 each carry the N6-acetyllysine modification. Thr407 carries the phosphothreonine modification. 2 positions are modified to N6-acetyllysine: Lys429 and Lys446. Ser460 and Ser462 each carry phosphoserine. An N6-acetyllysine mark is found at Lys469 and Lys479. One can recognise an RRM 3 domain in the interval 488–562; it reads KTLVLSNLSY…RAIRLELQGP (75 aa). Residue Lys515 forms a Glycyl lysine isopeptide (Lys-Gly) (interchain with G-Cter in SUMO2); alternate linkage. The residue at position 515 (Lys515) is an N6-acetyllysine; alternate. Residue Lys523 is modified to N6-acetyllysine. Ser565 carries the post-translational modification Phosphoserine. Lys574 is modified (N6-acetyllysine). The RRM 4 domain occupies 574-649; the sequence is KTLFVKGLSE…NKVTLDWAKP (76 aa). Residue Lys579 forms a Glycyl lysine isopeptide (Lys-Gly) (interchain with G-Cter in SUMO2); alternate linkage. An N6-acetyllysine; alternate modification is found at Lys579. Ser582 carries the post-translational modification Phosphoserine. Lys591 is covalently cross-linked (Glycyl lysine isopeptide (Lys-Gly) (interchain with G-Cter in SUMO1); alternate). A Glycyl lysine isopeptide (Lys-Gly) (interchain with G-Cter in SUMO2); alternate cross-link involves residue Lys591. Ser593 and Ser621 each carry phosphoserine. Residue Lys626 forms a Glycyl lysine isopeptide (Lys-Gly) (interchain with G-Cter in SUMO2) linkage. The disordered stretch occupies residues 642 to 712; the sequence is VTLDWAKPKG…KPQGKKTKFE (71 aa). Lys648 is subject to N6-acetyllysine. Positions 652 to 698 are enriched in gly residues; it reads EGGFGGRGGGRGGFGGRGGGRGGRGGFGGRGRGGFGGRGGFRGGRGG. 9 positions are modified to asymmetric dimethylarginine: Arg658, Arg662, Arg668, Arg672, Arg675, Arg681, Arg683, Arg689, and Arg693. Arg696 bears the Asymmetric dimethylarginine; alternate mark. An Omega-N-methylarginine; alternate modification is found at Arg696. Basic and acidic residues predominate over residues 699 to 712; it reads GGDHKPQGKKTKFE.

As to quaternary structure, identified in a IGF2BP1-dependent mRNP granule complex containing untranslated mRNAs. Component of the SWAP complex that consists of NPM1, NCL/nucleolin, PARP1 and SWAP70. Component of a complex which is at least composed of HTATSF1/Tat-SF1, the P-TEFb complex components CDK9 and CCNT1, RNA polymerase II, SUPT5H, and NCL/nucleolin. Interacts with AICDA. Interacts with APTX. Interacts with C1QBP. Interacts with ERBB4. Interacts (via C-terminus) with FMR1 isoform 6 (via N-terminus). Interacts with GZF1; this interaction is important for nucleolar localization of GZF1. Interacts with NSUN2. Interacts with NVL. Interacts (via N-terminus domain) with SETX. Interacts (via RRM1 and C-terminal RRM4/Arg/Gly-rich domains) with TERT; the interaction is important for nucleolar localization of TERT. Interacts with WDR46. Interacts with ZFP36. Interacts with LRRC34. Interacts with RRP1B. Interacts with HNRNPU; this interaction occurs during mitosis. Interacts with RIOK1; RIOK1 recruits NCL to the PRMT5 for symmetrically methylation. Interacts with ZBTB7B. Interacts with MDK; this interaction promotes NCL clustering and lateral movements of this complex into lipid rafts leading to MDK internalization. Interacts with HDGF. Interacts with ALKBH2. Interacts with IGFBP5; this interaction is necessary for IGFBP5 localization to the nucleus. Interacts with DDX24 (when ubiquitinated); this interaction may be important during ribosome biogenesis. Some glutamate residues are glycylated by TTLL8. This modification occurs exclusively on glutamate residues and results in a glycine chain on the gamma-carboxyl group. In terms of processing, symmetrically methylated by PRMT5.

It is found in the nucleus. The protein resides in the nucleolus. It localises to the cytoplasm. Its function is as follows. Nucleolin is the major nucleolar protein of growing eukaryotic cells. It is found associated with intranucleolar chromatin and pre-ribosomal particles. It induces chromatin decondensation by binding to histone H1. It is thought to play a role in pre-rRNA transcription and ribosome assembly. May play a role in the process of transcriptional elongation. Binds RNA oligonucleotides with 5'-UUAGGG-3' repeats more tightly than the telomeric single-stranded DNA 5'-TTAGGG-3' repeats. This is Nucleolin (NCL) from Pongo abelii (Sumatran orangutan).